We begin with the raw amino-acid sequence, 111 residues long: Nucleoid-associated protein CT0805 (111 aa).

The protein belongs to the YbaB/EbfC family. As to quaternary structure, homodimer.

The protein resides in the cytoplasm. It is found in the nucleoid. In terms of biological role, binds to DNA and alters its conformation. May be involved in regulation of gene expression, nucleoid organization and DNA protection. The protein is Nucleoid-associated protein CT0805 of Chlorobaculum tepidum (strain ATCC 49652 / DSM 12025 / NBRC 103806 / TLS) (Chlorobium tepidum).